The chain runs to 195 residues: ATP-dependent Clp protease proteolytic subunit (195 aa).

Residue S101 is the Nucleophile of the active site. Residue H126 is part of the active site.

It belongs to the peptidase S14 family.

Its subcellular location is the plastid. The protein resides in the chloroplast stroma. It carries out the reaction Hydrolysis of proteins to small peptides in the presence of ATP and magnesium. alpha-casein is the usual test substrate. In the absence of ATP, only oligopeptides shorter than five residues are hydrolyzed (such as succinyl-Leu-Tyr-|-NHMec, and Leu-Tyr-Leu-|-Tyr-Trp, in which cleavage of the -Tyr-|-Leu- and -Tyr-|-Trp bonds also occurs).. Cleaves peptides in various proteins in a process that requires ATP hydrolysis. Has a chymotrypsin-like activity. Plays a major role in the degradation of misfolded proteins. In Bigelowiella natans (Pedinomonas minutissima), this protein is ATP-dependent Clp protease proteolytic subunit.